The sequence spans 405 residues: Probable tRNA sulfurtransferase (405 aa).

Residues 60-165 (DKIDQRLKLV…QDAIYISNQL (106 aa)) form the THUMP domain. Residues 183–184 (ML), 208–209 (HF), Arg-265, Gly-287, and Gln-296 contribute to the ATP site.

It belongs to the ThiI family.

The protein resides in the cytoplasm. It carries out the reaction [ThiI sulfur-carrier protein]-S-sulfanyl-L-cysteine + a uridine in tRNA + 2 reduced [2Fe-2S]-[ferredoxin] + ATP + H(+) = [ThiI sulfur-carrier protein]-L-cysteine + a 4-thiouridine in tRNA + 2 oxidized [2Fe-2S]-[ferredoxin] + AMP + diphosphate. It catalyses the reaction [ThiS sulfur-carrier protein]-C-terminal Gly-Gly-AMP + S-sulfanyl-L-cysteinyl-[cysteine desulfurase] + AH2 = [ThiS sulfur-carrier protein]-C-terminal-Gly-aminoethanethioate + L-cysteinyl-[cysteine desulfurase] + A + AMP + 2 H(+). The protein operates within cofactor biosynthesis; thiamine diphosphate biosynthesis. In terms of biological role, catalyzes the ATP-dependent transfer of a sulfur to tRNA to produce 4-thiouridine in position 8 of tRNAs, which functions as a near-UV photosensor. Also catalyzes the transfer of sulfur to the sulfur carrier protein ThiS, forming ThiS-thiocarboxylate. This is a step in the synthesis of thiazole, in the thiamine biosynthesis pathway. The sulfur is donated as persulfide by IscS. The polypeptide is Probable tRNA sulfurtransferase (Lactobacillus gasseri (strain ATCC 33323 / DSM 20243 / BCRC 14619 / CIP 102991 / JCM 1131 / KCTC 3163 / NCIMB 11718 / NCTC 13722 / AM63)).